The sequence spans 194 residues: Ion-translocating oxidoreductase complex subunit A (194 aa).

The next 6 helical transmembrane spans lie at 4–24, 39–59, 72–92, 102–122, 135–155, and 172–192; these read LVLI…QFLG, IGLA…SYLL, LRTI…EMLV, VLGI…VALL, GING…FAAM, and AIGL…SGLI.

This sequence belongs to the NqrDE/RnfAE family. The complex is composed of six subunits: RnfA, RnfB, RnfC, RnfD, RnfE and RnfG.

The protein localises to the cell inner membrane. Functionally, part of a membrane-bound complex that couples electron transfer with translocation of ions across the membrane. The chain is Ion-translocating oxidoreductase complex subunit A from Azotobacter vinelandii (strain DJ / ATCC BAA-1303).